The chain runs to 659 residues: Envelope glycoprotein (659 aa).

The N-terminal stretch at 1–35 (MLLISNPRHLGHPMSPGNWKRLIILLSCVFGGAEM) is a signal peptide. The Extracellular portion of the chain corresponds to 36-606 (NQQHNNPHQP…NRSPWLTTLL (571 aa)). Disulfide bonds link Cys-141-Cys-162 and Cys-154-Cys-167. A disordered region spans residues 278 to 301 (LSPPASPIPTVQASPPAPSTPSPT). Residue Asn-318 is glycosylated (N-linked (GlcNAc...) asparagine; by host). 3 cysteine pairs are disulfide-bonded: Cys-328–Cys-331, Cys-328–Cys-558, and Cys-550–Cys-557. A CXXC motif is present at residues 328-331 (CWLC). N-linked (GlcNAc...) asparagine; by host glycosylation is found at Asn-389, Asn-395, Asn-407, and Asn-427. A fusion peptide region spans residues 466-486 (VSLTLAVLLGLGVAAGIGTGS). A coiled-coil region spans residues 506–532 (AMDTDLRALQDSISKLEDSLTSLSEVV). Residues 533 to 549 (LQNRRGLDLLFLKEGGL) are immunosuppression. The CX6CC motif lies at 550–558 (CAALKEECC). Residues 567–587 (VRDSMRRLKERLDKRQLEHQK) adopt a coiled-coil conformation. The chain crosses the membrane as a helical span at residues 607–627 (SALAGPLLLLLLLLTLGPCVI). Cys-625 carries S-palmitoyl cysteine; by host lipidation. Residues 628 to 659 (NKLVQFINDRVSAVRILVLRHKYQTLDNEDNL) are Cytoplasmic-facing. A YXXL motif; contains endocytosis signal motif is present at residues 650–653 (YQTL).

In terms of assembly, the mature envelope protein (Env) consists of a trimer of SU-TM heterodimers attached by a labile interchain disulfide bond. Post-translationally, specific enzymatic cleavages in vivo yield mature proteins. Envelope glycoproteins are synthesized as an inactive precursor that is N-glycosylated and processed likely by host cell furin or by a furin-like protease in the Golgi to yield the mature SU and TM proteins. The cleavage site between SU and TM requires the minimal sequence [KR]-X-[KR]-R. The R-peptide is released from the C-terminus of the cytoplasmic tail of the TM protein upon particle formation as a result of proteolytic cleavage by the viral protease. Cleavage of this peptide is required for TM to become fusogenic. In terms of processing, the CXXC motif is highly conserved across a broad range of retroviral envelope proteins. It is thought to participate in the formation of a labile disulfide bond possibly with the CX6CC motif present in the transmembrane protein. Isomerization of the intersubunit disulfide bond to an SU intrachain disulfide bond is thought to occur upon receptor recognition in order to allow membrane fusion. The transmembrane protein is palmitoylated. Post-translationally, the R-peptide is palmitoylated.

It localises to the virion membrane. It is found in the host cell membrane. Its function is as follows. The surface protein (SU) attaches the virus to the host cell by binding to its receptor. This interaction triggers the refolding of the transmembrane protein (TM) and is thought to activate its fusogenic potential by unmasking its fusion peptide. Fusion occurs at the host cell plasma membrane. Functionally, the transmembrane protein (TM) acts as a class I viral fusion protein. Under the current model, the protein has at least 3 conformational states: pre-fusion native state, pre-hairpin intermediate state, and post-fusion hairpin state. During viral and target cell membrane fusion, the coiled coil regions (heptad repeats) assume a trimer-of-hairpins structure, positioning the fusion peptide in close proximity to the C-terminal region of the ectodomain. The formation of this structure appears to drive apposition and subsequent fusion of viral and target cell membranes. Membranes fusion leads to delivery of the nucleocapsid into the cytoplasm. This Phascolarctos cinereus (Koala) protein is Envelope glycoprotein (env).